The following is a 354-amino-acid chain: Kelch domain-containing protein 8B (354 aa).

Kelch repeat units follow at residues 1–31 (MATG…FQDG), 32–79 (HLLV…VLGK), 81–127 (VLVV…ERDG), 128–175 (MVYA…LHGN), 176–222 (KIYV…MAEG), 224–281 (VFSL…SLGD), 282–329 (HVVA…QAGP), and 331–354 (LFAI…RDGV).

The protein resides in the cytoplasm. Its subcellular location is the midbody. Its function is as follows. Involved in pinching off the separated nuclei at the cleavage furrow and in cytokinesis. Required for mitotic integrity and maintenance of chromosomal stability. Protects cells against mitotic errors, centrosomal amplification, micronucleus formation and aneuploidy. Plays a key role of midbody function involving abscission of the daughter cells during cytokinesis and appropriate chromosomal and nuclear segregation into the daughter cells. The protein is Kelch domain-containing protein 8B (KLHDC8B) of Bos taurus (Bovine).